Reading from the N-terminus, the 153-residue chain is Nitrogen regulatory protein (153 aa).

The PTS EIIA type-2 domain maps to D5 to P148. The active-site Tele-phosphohistidine intermediate is the H66.

It is found in the cytoplasm. Functionally, seems to have a role in regulating nitrogen assimilation. The sequence is that of Nitrogen regulatory protein (ptsN) from Bradyrhizobium diazoefficiens (strain JCM 10833 / BCRC 13528 / IAM 13628 / NBRC 14792 / USDA 110).